We begin with the raw amino-acid sequence, 311 residues long: Pyrimidine-specific ribonucleoside hydrolase RihA (311 aa).

The active site involves His240.

It belongs to the IUNH family. RihA subfamily.

Functionally, hydrolyzes cytidine or uridine to ribose and cytosine or uracil, respectively. In Salmonella arizonae (strain ATCC BAA-731 / CDC346-86 / RSK2980), this protein is Pyrimidine-specific ribonucleoside hydrolase RihA.